Consider the following 429-residue polypeptide: Septin-11 (429 aa).

Position 2 is an N-acetylalanine (alanine 2). Position 9 is a phosphoserine (serine 9). The 267-residue stretch at 38–304 (QGFCFNILCV…ELYRRCKLEE (267 aa)) folds into the Septin-type G domain. Residues 48–55 (GETGIGKS) are G1 motif. GTP-binding positions include 48–55 (GETGIGKS), glycine 103, 184–192 (KADTIAKNE), glycine 238, and arginine 253. Residues 100-103 (DTVG) form a G3 motif region. Residues 183-186 (AKAD) form a G4 motif region. Residues 320 to 415 (QETYEAKRNE…QSQAQQSGAQ (96 aa)) adopt a coiled-coil conformation. The disordered stretch occupies residues 398 to 429 (KKAAAQLLQSQAQQSGAQQTKKDKDKKNASFT). A compositionally biased stretch (low complexity) spans 401 to 416 (AAQLLQSQAQQSGAQQ). Over residues 417–429 (TKKDKDKKNASFT) the composition is skewed to basic and acidic residues.

The protein belongs to the TRAFAC class TrmE-Era-EngA-EngB-Septin-like GTPase superfamily. Septin GTPase family. In terms of assembly, septins polymerize into heterooligomeric protein complexes that form filaments, and can associate with cellular membranes, actin filaments and microtubules. Forms homooligomers. GTPase activity is required for filament formation. Interacts with SEPTIN7, SEPTIN9 and SEPTIN12. As to expression, widely expressed, except in leukocytes.

The protein resides in the cytoplasm. The protein localises to the cytoskeleton. It localises to the synapse. It is found in the cell projection. Its subcellular location is the dendritic spine. The protein resides in the axon. Functionally, filament-forming cytoskeletal GTPase. May play a role in cytokinesis (Potential). May play a role in the cytoarchitecture of neurons, including dendritic arborization and dendritic spines, and in GABAergic synaptic connectivity. During Listeria monocytogenes infection, not required for the bacterial entry process, but restricts its efficacy. The polypeptide is Septin-11 (Homo sapiens (Human)).